We begin with the raw amino-acid sequence, 434 residues long: Lecithin-cholesterol acyltransferase-like 1 (434 aa).

Catalysis depends on Ser-191, which acts as the Acyl-ester intermediate. Active-site charge relay system residues include Asp-354 and His-386.

The protein belongs to the AB hydrolase superfamily. Lipase family.

This chain is Lecithin-cholesterol acyltransferase-like 1, found in Oryza sativa subsp. japonica (Rice).